We begin with the raw amino-acid sequence, 382 residues long: Lipid-A-disaccharide synthase (382 aa).

It belongs to the LpxB family.

The catalysed reaction is 2-N,3-O-bis[(3R)-3-hydroxytetradecanoyl]-alpha-D-glucosaminyl 1-phosphate + UDP-2-N,3-O-bis[(3R)-3-hydroxytetradecanoyl]-alpha-D-glucosamine = lipid A disaccharide (E. coli) + UDP + H(+). The enzyme catalyses a lipid X + a UDP-2-N,3-O-bis[(3R)-3-hydroxyacyl]-alpha-D-glucosamine = a lipid A disaccharide + UDP + H(+). The protein operates within glycolipid biosynthesis; lipid IV(A) biosynthesis; lipid IV(A) from (3R)-3-hydroxytetradecanoyl-[acyl-carrier-protein] and UDP-N-acetyl-alpha-D-glucosamine: step 5/6. Functionally, condensation of UDP-2,3-diacylglucosamine and 2,3-diacylglucosamine-1-phosphate to form lipid A disaccharide, a precursor of lipid A, a phosphorylated glycolipid that anchors the lipopolysaccharide to the outer membrane of the cell. The chain is Lipid-A-disaccharide synthase from Escherichia coli O45:K1 (strain S88 / ExPEC).